The sequence spans 34 residues: Photosystem II reaction center protein M (34 aa).

Residues 7–27 (GFVASLLFVLVPTVFLIILFI) form a helical membrane-spanning segment.

Belongs to the PsbM family. PSII is composed of 1 copy each of membrane proteins PsbA, PsbB, PsbC, PsbD, PsbE, PsbF, PsbH, PsbI, PsbJ, PsbK, PsbL, PsbM, PsbT, PsbX, PsbY, PsbZ, Psb30/Ycf12, peripheral proteins PsbO, CyanoQ (PsbQ), PsbU, PsbV and a large number of cofactors. It forms dimeric complexes.

The protein localises to the cellular thylakoid membrane. Its function is as follows. One of the components of the core complex of photosystem II (PSII). PSII is a light-driven water:plastoquinone oxidoreductase that uses light energy to abstract electrons from H(2)O, generating O(2) and a proton gradient subsequently used for ATP formation. It consists of a core antenna complex that captures photons, and an electron transfer chain that converts photonic excitation into a charge separation. This subunit is found at the monomer-monomer interface. This Synechococcus sp. (strain WH7803) protein is Photosystem II reaction center protein M.